We begin with the raw amino-acid sequence, 208 residues long: PITH domain-containing protein ZK353.9 (208 aa).

Residues 17–189 (EVPGDDVYRY…RIAIATYESR (173 aa)) form the PITH domain.

It belongs to the PITHD1 family.

The protein is PITH domain-containing protein ZK353.9 of Caenorhabditis elegans.